The following is a 1036-amino-acid chain: Ephrin type-A receptor 6 (1036 aa).

Positions 1-22 (MGGCEVREFLLQFGFFLPLLTA) are cleaved as a signal peptide. Residues 23–550 (WPGDCSHVSN…MAAEQGQILV (528 aa)) lie on the Extracellular side of the membrane. The Eph LBD domain occupies 34–212 (QVVLLDTTTV…FYKKCPFTVR (179 aa)). Fibronectin type-III domains follow at residues 331-441 (PPSA…TDQD) and 442-537 (APSL…TGDE). N-linked (GlcNAc...) asparagine glycans are attached at residues Asn-343, Asn-397, and Asn-410. A helical transmembrane segment spans residues 551-571 (IATAAVGGFTLLVILTLFFLI). Over 572 to 1036 (TGRCQWYIKA…MHIQEKGFHV (465 aa)) the chain is Cytoplasmic. Tyr-606 and Tyr-612 each carry phosphotyrosine; by autocatalysis. In terms of domain architecture, Protein kinase spans 631–944 (IRIERVIGAG…RNPSALHTLV (314 aa)). Residues 637–645 (IGAGEFGEV) and Lys-663 each bind ATP. Catalysis depends on Asp-798, which acts as the Proton acceptor. Residues Tyr-831 and Tyr-978 each carry the phosphotyrosine; by autocatalysis modification. The region spanning 961–1025 (PLFVTVGDWL…VSSIQTLRLH (65 aa)) is the SAM domain. The PDZ-binding motif lies at 1034–1036 (FHV).

This sequence belongs to the protein kinase superfamily. Tyr protein kinase family. Ephrin receptor subfamily. As to quaternary structure, heterotetramer upon binding of the ligand. The heterotetramer is composed of an ephrin dimer and a receptor dimer. Oligomerization is probably required to induce biological responses. Interacts (via SAM domain) with ANKS1A (via SAM domain). As to expression, expressed in brain and testis.

It localises to the membrane. The catalysed reaction is L-tyrosyl-[protein] + ATP = O-phospho-L-tyrosyl-[protein] + ADP + H(+). Receptor tyrosine kinase which binds promiscuously GPI-anchored ephrin-A family ligands residing on adjacent cells, leading to contact-dependent bidirectional signaling into neighboring cells. The signaling pathway downstream of the receptor is referred to as forward signaling while the signaling pathway downstream of the ephrin ligand is referred to as reverse signaling. In Homo sapiens (Human), this protein is Ephrin type-A receptor 6 (EPHA6).